Consider the following 140-residue polypeptide: Large ribosomal subunit protein uL11 (140 aa).

The protein belongs to the universal ribosomal protein uL11 family. In terms of assembly, part of the ribosomal stalk of the 50S ribosomal subunit. Interacts with L10 and the large rRNA to form the base of the stalk. L10 forms an elongated spine to which L12 dimers bind in a sequential fashion forming a multimeric L10(L12)X complex. Post-translationally, one or more lysine residues are methylated.

Functionally, forms part of the ribosomal stalk which helps the ribosome interact with GTP-bound translation factors. This chain is Large ribosomal subunit protein uL11, found in Symbiobacterium thermophilum (strain DSM 24528 / JCM 14929 / IAM 14863 / T).